The chain runs to 435 residues: Arginine biosynthesis bifunctional protein ArgJ, mitochondrial (435 aa).

The substrate site is built by threonine 179, lysine 205, threonine 216, glutamate 302, asparagine 430, and serine 435. The Nucleophile role is filled by threonine 216.

This sequence belongs to the ArgJ family. As to quaternary structure, heterodimer of an alpha and a beta chain. In terms of processing, the alpha and beta chains are autoproteolytically processed from a single precursor protein within the mitochondrion.

The protein resides in the mitochondrion matrix. The enzyme catalyses N(2)-acetyl-L-ornithine + L-glutamate = N-acetyl-L-glutamate + L-ornithine. It catalyses the reaction L-glutamate + acetyl-CoA = N-acetyl-L-glutamate + CoA + H(+). Its pathway is amino-acid biosynthesis; L-arginine biosynthesis; L-ornithine and N-acetyl-L-glutamate from L-glutamate and N(2)-acetyl-L-ornithine (cyclic): step 1/1. It functions in the pathway amino-acid biosynthesis; L-arginine biosynthesis; N(2)-acetyl-L-ornithine from L-glutamate: step 1/4. Its function is as follows. Catalyzes two activities which are involved in the cyclic version of arginine biosynthesis: the synthesis of acetylglutamate from glutamate and acetyl-CoA, and of ornithine by transacetylation between acetylornithine and glutamate. The sequence is that of Arginine biosynthesis bifunctional protein ArgJ, mitochondrial from Schizosaccharomyces japonicus (strain yFS275 / FY16936) (Fission yeast).